The sequence spans 202 residues: Imidazoleglycerol-phosphate dehydratase (202 aa).

This sequence belongs to the imidazoleglycerol-phosphate dehydratase family.

The protein resides in the cytoplasm. The catalysed reaction is D-erythro-1-(imidazol-4-yl)glycerol 3-phosphate = 3-(imidazol-4-yl)-2-oxopropyl phosphate + H2O. It functions in the pathway amino-acid biosynthesis; L-histidine biosynthesis; L-histidine from 5-phospho-alpha-D-ribose 1-diphosphate: step 6/9. This chain is Imidazoleglycerol-phosphate dehydratase, found in Nocardioides sp. (strain ATCC BAA-499 / JS614).